Consider the following 199-residue polypeptide: dITP/XTP pyrophosphatase (199 aa).

8-13 serves as a coordination point for substrate; it reads SGNAGK. Asp-69 serves as the catalytic Proton acceptor. Mg(2+) is bound at residue Asp-69. Substrate-binding positions include Ser-70, 154-157, Lys-177, and 182-183; these read FGYN and HR.

It belongs to the HAM1 NTPase family. In terms of assembly, homodimer. Mg(2+) is required as a cofactor.

The enzyme catalyses XTP + H2O = XMP + diphosphate + H(+). The catalysed reaction is dITP + H2O = dIMP + diphosphate + H(+). It catalyses the reaction ITP + H2O = IMP + diphosphate + H(+). Functionally, pyrophosphatase that catalyzes the hydrolysis of nucleoside triphosphates to their monophosphate derivatives, with a high preference for the non-canonical purine nucleotides XTP (xanthosine triphosphate), dITP (deoxyinosine triphosphate) and ITP. Seems to function as a house-cleaning enzyme that removes non-canonical purine nucleotides from the nucleotide pool, thus preventing their incorporation into DNA/RNA and avoiding chromosomal lesions. The polypeptide is dITP/XTP pyrophosphatase (Xylella fastidiosa (strain Temecula1 / ATCC 700964)).